Consider the following 66-residue polypeptide: Large ribosomal subunit protein uL29 (66 aa).

The protein belongs to the universal ribosomal protein uL29 family.

The polypeptide is Large ribosomal subunit protein uL29 (Francisella philomiragia subsp. philomiragia (strain ATCC 25017 / CCUG 19701 / FSC 153 / O#319-036)).